The sequence spans 261 residues: Syntaxin-7 (261 aa).

At S2 the chain carries N-acetylserine. At 2–238 (SYTPGIGGDS…DYQRKSRKTL (237 aa)) the chain is on the cytoplasmic side. The residue at position 4 (T4) is a Phosphothreonine. Residue S45 is modified to Phosphoserine. A coiled-coil region spans residues 47–68 (ELRQLLQQKQQYTNQLAKETDK). A Phosphoserine modification is found at S75. Position 79 is a phosphothreonine (T79). Phosphoserine is present on residues S125, S126, S129, and S205. The tract at residues 128-148 (VSGGFPEDSSKEKNLVSWESQ) is disordered. A t-SNARE coiled-coil homology domain is found at 165-227 (LRLIHERESS…QQANQQLSRA (63 aa)). The helical; Anchor for type IV membrane protein transmembrane segment at 239-259 (CIIIFILVVRIVIICLIVWGL) threads the bilayer. Topologically, residues 260–261 (KG) are vesicular.

This sequence belongs to the syntaxin family. As to quaternary structure, interacts with VPS11, VPS16 and VPS18. Interacts with VPS33A. Forms a SNARE complex with VTI1B, STX8 and VAMP8 which functions in the homotypic fusion of late endosomes. Component of the SNARE complex composed of STX7, STX8, VAMP7 and VTI1B that is required for heterotypic fusion of late endosomes with lysosomes. Interacts with TPC1.

It is found in the early endosome membrane. In terms of biological role, may be involved in protein trafficking from the plasma membrane to the early endosome (EE) as well as in homotypic fusion of endocytic organelles. Mediates the endocytic trafficking from early endosomes to late endosomes and lysosomes. This is Syntaxin-7 (Stx7) from Mus musculus (Mouse).